Reading from the N-terminus, the 124-residue chain is Kinocilin (124 aa).

The next 2 membrane-spanning stretches (helical) occupy residues 13–33 (LQLA…GVSV) and 40–60 (VGGI…YPFL). The tract at residues 80–124 (PNSGPDHGEGRSSNNSNKEGARSGLSTVTRTLEKLKPGGRGTEEG) is disordered. Over residues 90–109 (RSSNNSNKEGARSGLSTVTR) the composition is skewed to polar residues. The segment covering 110 to 124 (TLEKLKPGGRGTEEG) has biased composition (basic and acidic residues).

In terms of tissue distribution, preferentially expressed in the inner ear and testis. Localizes mainly in the kinocilium of sensory cells in the inner ear. Also present in the manchette of the spermatids, a transient structure enriched in interconnected microtubules (at protein level).

The protein resides in the membrane. In terms of biological role, may play a role in stabilizing dense microtubular networks or in vesicular trafficking. This is Kinocilin (Kncn) from Mus musculus (Mouse).